The sequence spans 94 residues: Co-chaperonin GroES (94 aa).

Belongs to the GroES chaperonin family. In terms of assembly, heptamer of 7 subunits arranged in a ring. Interacts with the chaperonin GroEL.

The protein localises to the cytoplasm. Together with the chaperonin GroEL, plays an essential role in assisting protein folding. The GroEL-GroES system forms a nano-cage that allows encapsulation of the non-native substrate proteins and provides a physical environment optimized to promote and accelerate protein folding. GroES binds to the apical surface of the GroEL ring, thereby capping the opening of the GroEL channel. This is Co-chaperonin GroES from Streptococcus agalactiae serotype III (strain NEM316).